The primary structure comprises 108 residues: Malonate decarboxylase acyl carrier protein (108 aa).

Serine 35 is subject to O-(phosphoribosyl dephospho-coenzyme A)serine.

It belongs to the MdcC family. In terms of processing, covalently binds the prosthetic group of malonate decarboxylase.

The protein resides in the cytoplasm. Functionally, subunit of malonate decarboxylase, it is an acyl carrier protein to which acetyl and malonyl thioester residues are bound via a 2'-(5''-phosphoribosyl)-3'-dephospho-CoA prosthetic group and turn over during the catalytic mechanism. The protein is Malonate decarboxylase acyl carrier protein of Burkholderia cepacia (Pseudomonas cepacia).